Consider the following 348-residue polypeptide: Killer cell immunoglobulin-like receptor 2DL1 (348 aa).

The first 21 residues, 1 to 21 (MSLLVVSMACVGFFLLQGAWP), serve as a signal peptide directing secretion. Topologically, residues 22–245 (HEGVHRKPSL…SKTGNPRHLH (224 aa)) are extracellular. Ig-like C2-type domains lie at 42–107 (EETV…VTHS) and 142–205 (GENV…FHDS). Cysteine 49 and cysteine 100 are disulfide-bonded. 4 N-linked (GlcNAc...) asparagine glycosylation sites follow: asparagine 67, asparagine 84, asparagine 144, and asparagine 178. The cysteines at positions 149 and 198 are disulfide-linked. The tract at residues 220–239 (VTGNPSNSWPSPTEPSSKTG) is disordered. Residues 246–264 (ILIGTSVVIILFILLFFLL) form a helical membrane-spanning segment. Over 265 to 348 (HRWCSNKKNA…ESRSKVVSCP (84 aa)) the chain is Cytoplasmic.

This sequence belongs to the immunoglobulin superfamily. In terms of assembly, interacts with ARRB2. Interacts with PTPN6; the interaction is enhanced by ARRB2. Interacts with PTPN11; the interaction is enhanced by ARRB2. As to expression, expressed by NK cells.

Its subcellular location is the cell membrane. Receptor on natural killer (NK) cells for some HLA-C alleles such as w4 and w6. Inhibits the activity of NK cells thus preventing cell lysis. In Homo sapiens (Human), this protein is Killer cell immunoglobulin-like receptor 2DL1.